Reading from the N-terminus, the 321-residue chain is tRNA-5-methyluridine(54) 2-sulfurtransferase (321 aa).

Cysteine 3, cysteine 6, cysteine 22, and histidine 25 together coordinate Zn(2+). ATP is bound by residues 53–55, aspartate 59, and isoleucine 79; that span reads AVS. Residues cysteine 130 and cysteine 133 each contribute to the [4Fe-4S] cluster site. Lysine 137 is covalently cross-linked (Glycyl lysine isopeptide (Lys-Gly) (interchain with G-Cter in TtuB)). Residues glycine 156 and aspartate 161 each coordinate ATP. Residue cysteine 222 coordinates [4Fe-4S] cluster. Residues lysine 226 and lysine 229 each participate in a glycyl lysine isopeptide (Lys-Gly) (interchain with G-Cter in TtuB) cross-link. 4 residues coordinate Zn(2+): cysteine 274, cysteine 277, cysteine 286, and cysteine 289.

It belongs to the TtcA family. TtuA subfamily. Homodimer. Is able to form a heterocomplex with TtuB. It depends on [4Fe-4S] cluster as a cofactor. Requires Mg(2+) as cofactor. Post-translationally, conjugated to TtuB via covalent linkages involving Lys-137, Lys-226 and Lys-229.

The catalysed reaction is [TtuB sulfur-carrier protein]-C-terminal-Gly-aminoethanethioate + 5-methyluridine(54) in tRNA + ATP + H2O = [TtuB sulfur-carrier protein]-C-terminal Gly-Gly + 5-methyl-2-thiouridine(54) in tRNA + AMP + diphosphate + H(+). The protein operates within tRNA modification. Its activity is regulated as follows. Enzymatic activity may be regulated by TtuB conjugation. In terms of biological role, catalyzes the ATP-dependent 2-thiolation of 5-methyluridine residue at position 54 in the T loop of tRNAs, leading to 5-methyl-2-thiouridine (m(5)s(2)U or s(2)T). This modification allows thermal stabilization of tRNAs in thermophilic microorganisms, and is required for cell growth at high temperatures. TtuA transfers the S atom from the thiocarboxylated C-terminus of TtuB to tRNA. In Thermus thermophilus (strain ATCC BAA-163 / DSM 7039 / HB27), this protein is tRNA-5-methyluridine(54) 2-sulfurtransferase.